The sequence spans 490 residues: VALMILRKNLKKPDSIPNIPPGPWKLPIIGSIPHLVGSPPHRKLRDLAKKYGPLMHLQLGEVIFIIVSSAEYAKEVMKTHDVTFASRPRSLFTDIVFYGSTDIGFSPYGDYWRQVRKICNVELLSMKRVQSLWPIREEEVKNLIQRIASEEGSVVNLSQAIDSLIFTITSRSAFGKRYMEQEEFISCVREVMKLAGGFNIADLFPSAKWLENLTRMRSKFEYLHQKMDRILETIIDDHKANSRTKEGQVEGGEEDLIDVLLKYENSSTDQDFHLTIRNIKAILFDIFIAGSETSATTINWTMAEMMKDPILLKKAQDEVREIFQRRGKVDETCIYELKYLKAFINEVLRLHPPGPLVFRECRQACEINGYHIPAKSTVLVNTFAIGTDSKYWAEPERFCPERFIDSSIDYKGTNFEHLPFGAGRRICPGINYGMANVELVLALLLYHFDWTLPKGIKNEDLDLTEEFGVTVSKKEDLCLIPSISHPLPST.

Cys-427 lines the heme pocket.

It belongs to the cytochrome P450 family. Requires heme as cofactor.

This chain is Cytochrome P450 71D11 (CYP71D11), found in Lotus japonicus (Lotus corniculatus var. japonicus).